Consider the following 147-residue polypeptide: uncharacterized protein (147 aa).

The chain crosses the membrane as a helical span at residues 3–23; that stretch reads APMIGMVVLVVVLGLAVLALS.

This sequence to M.leprae ML1147.

Its subcellular location is the membrane. This is an uncharacterized protein from Mycobacterium tuberculosis (strain CDC 1551 / Oshkosh).